The primary structure comprises 618 residues: 1-deoxy-D-xylulose-5-phosphate synthase (618 aa).

Residues His77 and 118–120 (GHS) contribute to the thiamine diphosphate site. Asp149 contributes to the Mg(2+) binding site. Thiamine diphosphate-binding positions include 150 to 151 (GA), Asn178, Tyr285, and Glu367. Asn178 is a binding site for Mg(2+).

This sequence belongs to the transketolase family. DXPS subfamily. As to quaternary structure, homodimer. Mg(2+) is required as a cofactor. Requires thiamine diphosphate as cofactor.

It carries out the reaction D-glyceraldehyde 3-phosphate + pyruvate + H(+) = 1-deoxy-D-xylulose 5-phosphate + CO2. It participates in metabolic intermediate biosynthesis; 1-deoxy-D-xylulose 5-phosphate biosynthesis; 1-deoxy-D-xylulose 5-phosphate from D-glyceraldehyde 3-phosphate and pyruvate: step 1/1. In terms of biological role, catalyzes the acyloin condensation reaction between C atoms 2 and 3 of pyruvate and glyceraldehyde 3-phosphate to yield 1-deoxy-D-xylulose-5-phosphate (DXP). The chain is 1-deoxy-D-xylulose-5-phosphate synthase from Idiomarina loihiensis (strain ATCC BAA-735 / DSM 15497 / L2-TR).